We begin with the raw amino-acid sequence, 545 residues long: CTP synthase (545 aa).

Residues 1–266 form an amidoligase domain region; it reads MITNYIFVTG…DQYICDKFNL (266 aa). S14 lines the CTP pocket. A UTP-binding site is contributed by S14. ATP-binding positions include 15–20 and D72; that span reads SLGKGI. D72 and E140 together coordinate Mg(2+). CTP-binding positions include 147 to 149, 187 to 192, and K223; these read DIE and KTKPTQ. UTP-binding positions include 187 to 192 and K223; that span reads KTKPTQ. 239–241 is an ATP binding site; it reads KDV. A Glutamine amidotransferase type-1 domain is found at 291 to 542; the sequence is SIGMVGKYIE…VKSALAHHQD (252 aa). G352 is a binding site for L-glutamine. The active-site Nucleophile; for glutamine hydrolysis is C379. Residues 380–383, E403, and R470 contribute to the L-glutamine site; that span reads LGMQ. Active-site residues include H515 and E517.

This sequence belongs to the CTP synthase family. Homotetramer.

It catalyses the reaction UTP + L-glutamine + ATP + H2O = CTP + L-glutamate + ADP + phosphate + 2 H(+). It carries out the reaction L-glutamine + H2O = L-glutamate + NH4(+). The enzyme catalyses UTP + NH4(+) + ATP = CTP + ADP + phosphate + 2 H(+). Its pathway is pyrimidine metabolism; CTP biosynthesis via de novo pathway; CTP from UDP: step 2/2. With respect to regulation, allosterically activated by GTP, when glutamine is the substrate; GTP has no effect on the reaction when ammonia is the substrate. The allosteric effector GTP functions by stabilizing the protein conformation that binds the tetrahedral intermediate(s) formed during glutamine hydrolysis. Inhibited by the product CTP, via allosteric rather than competitive inhibition. In terms of biological role, catalyzes the ATP-dependent amination of UTP to CTP with either L-glutamine or ammonia as the source of nitrogen. Regulates intracellular CTP levels through interactions with the four ribonucleotide triphosphates. The sequence is that of CTP synthase from Hamiltonella defensa subsp. Acyrthosiphon pisum (strain 5AT).